Reading from the N-terminus, the 188-residue chain is MSRLRIFADTNPATPEFDSRDGDAIAAELVKIGVTFERWHASAPVEPGATPEQVMDAYRADIDRISAERGFKTVDVVSIAPDNPKREEMRAKFLDEHFHKEDEVRFFVAGSGLFTLHVDAKVYEIECVKDDLIAVPDGTLHWFDMGPEPHFVAIRFFTEPDGWVGHFTGTEIAKQFPRYAPKKPHKAS.

4 residues coordinate Fe(2+): His-97, His-99, Glu-103, and His-141. Residues His-97, His-99, Glu-103, and His-141 each coordinate Ni(2+).

This sequence belongs to the acireductone dioxygenase (ARD) family. As to quaternary structure, monomer. Fe(2+) is required as a cofactor. The cofactor is Ni(2+).

It carries out the reaction 1,2-dihydroxy-5-(methylsulfanyl)pent-1-en-3-one + O2 = 3-(methylsulfanyl)propanoate + CO + formate + 2 H(+). It catalyses the reaction 1,2-dihydroxy-5-(methylsulfanyl)pent-1-en-3-one + O2 = 4-methylsulfanyl-2-oxobutanoate + formate + 2 H(+). The protein operates within amino-acid biosynthesis; L-methionine biosynthesis via salvage pathway; L-methionine from S-methyl-5-thio-alpha-D-ribose 1-phosphate: step 5/6. Its function is as follows. Catalyzes 2 different reactions between oxygen and the acireductone 1,2-dihydroxy-3-keto-5-methylthiopentene (DHK-MTPene) depending upon the metal bound in the active site. Fe-containing acireductone dioxygenase (Fe-ARD) produces formate and 2-keto-4-methylthiobutyrate (KMTB), the alpha-ketoacid precursor of methionine in the methionine recycle pathway. Ni-containing acireductone dioxygenase (Ni-ARD) produces methylthiopropionate, carbon monoxide and formate, and does not lie on the methionine recycle pathway. The protein is Acireductone dioxygenase of Xanthomonas axonopodis pv. citri (strain 306).